Consider the following 422-residue polypeptide: 4-hydroxy-3-methylbut-2-en-1-yl diphosphate synthase (flavodoxin) (422 aa).

[4Fe-4S] cluster is bound by residues cysteine 316, cysteine 319, cysteine 362, and glutamate 369.

This sequence belongs to the IspG family. [4Fe-4S] cluster serves as cofactor.

It carries out the reaction (2E)-4-hydroxy-3-methylbut-2-enyl diphosphate + oxidized [flavodoxin] + H2O + 2 H(+) = 2-C-methyl-D-erythritol 2,4-cyclic diphosphate + reduced [flavodoxin]. Its pathway is isoprenoid biosynthesis; isopentenyl diphosphate biosynthesis via DXP pathway; isopentenyl diphosphate from 1-deoxy-D-xylulose 5-phosphate: step 5/6. Functionally, converts 2C-methyl-D-erythritol 2,4-cyclodiphosphate (ME-2,4cPP) into 1-hydroxy-2-methyl-2-(E)-butenyl 4-diphosphate. This Anaplasma marginale (strain St. Maries) protein is 4-hydroxy-3-methylbut-2-en-1-yl diphosphate synthase (flavodoxin).